A 717-amino-acid chain; its full sequence is Polyribonucleotide nucleotidyltransferase (717 aa).

Residues D496 and D502 each contribute to the Mg(2+) site. In terms of domain architecture, KH spans 563 to 622 (PRLLSFKIDPEMIGLVIGPGGKTIKGITEETGVKIDIDDDGTVTIAAADGEKAKQACNII). The region spanning 632 to 700 (GDVYVGRVTR…SKGRVNLTRL (69 aa)) is the S1 motif domain.

The protein belongs to the polyribonucleotide nucleotidyltransferase family. Requires Mg(2+) as cofactor.

It is found in the cytoplasm. It catalyses the reaction RNA(n+1) + phosphate = RNA(n) + a ribonucleoside 5'-diphosphate. Functionally, involved in mRNA degradation. Catalyzes the phosphorolysis of single-stranded polyribonucleotides processively in the 3'- to 5'-direction. In Trichodesmium erythraeum (strain IMS101), this protein is Polyribonucleotide nucleotidyltransferase.